An 89-amino-acid polypeptide reads, in one-letter code: Small ribosomal subunit protein bS20 (89 aa).

Basic residues predominate over residues Met-1–His-10. The interval Met-1–Thr-30 is disordered. The segment covering Asn-11–Thr-30 has biased composition (basic and acidic residues).

It belongs to the bacterial ribosomal protein bS20 family.

Its function is as follows. Binds directly to 16S ribosomal RNA. The sequence is that of Small ribosomal subunit protein bS20 from Treponema denticola (strain ATCC 35405 / DSM 14222 / CIP 103919 / JCM 8153 / KCTC 15104).